A 669-amino-acid polypeptide reads, in one-letter code: Cysteine-rich receptor-like protein kinase 10 (669 aa).

The first 34 residues, 1 to 34 (MRRNTDQESPIMSYYSSFFFLFLFSFLTSFRVSA), serve as a signal peptide directing secretion. The Extracellular segment spans residues 35–285 (QDPTYVYHTC…PRSGKDGNSK (251 aa)). Gnk2-homologous domains follow at residues 38–142 (TYVY…NQNI) and 148–252 (TTGG…IYAF). Asn-49, Asn-53, Asn-71, and Asn-80 each carry an N-linked (GlcNAc...) asparagine glycan. 2 disulfide bridges follow: Cys-96/Cys-105 and Cys-108/Cys-133. 4 N-linked (GlcNAc...) asparagine glycosylation sites follow: Asn-114, Asn-159, Asn-185, and Asn-196. Intrachain disulfides connect Cys-209–Cys-218 and Cys-221–Cys-243. A compositionally biased stretch (pro residues) spans 260–274 (PPPPPPSISTPPVSA). The tract at residues 260–280 (PPPPPPSISTPPVSAPPRSGK) is disordered. The helical transmembrane segment at 286–306 (VLVIAIVVPIIVAVLLFIAGY) threads the bilayer. Topologically, residues 307 to 669 (CFLTRRARKS…DASITDIHPR (363 aa)) are cytoplasmic. Positions 348 to 634 (FVESNKIGQG…TLPVPRQPGL (287 aa)) constitute a Protein kinase domain. ATP-binding positions include 354-362 (IGQGGFGEV) and Lys-376. At Tyr-421 the chain carries Phosphotyrosine. The active-site Proton acceptor is Asp-473. Ser-477 carries the phosphoserine modification. Residue Thr-513 is modified to Phosphothreonine. Tyr-521 carries the post-translational modification Phosphotyrosine.

Belongs to the protein kinase superfamily. Ser/Thr protein kinase family. CRK subfamily. In terms of assembly, interacts with CRKIP1 (KAPP), CRKIP2 and CRKIP3, three kinase-associated type 2C proteins.

It localises to the membrane. It carries out the reaction L-seryl-[protein] + ATP = O-phospho-L-seryl-[protein] + ADP + H(+). The catalysed reaction is L-threonyl-[protein] + ATP = O-phospho-L-threonyl-[protein] + ADP + H(+). The protein is Cysteine-rich receptor-like protein kinase 10 (CRK10) of Arabidopsis thaliana (Mouse-ear cress).